The sequence spans 370 residues: Chaperone protein DnaJ (370 aa).

Positions 6-70 constitute a J domain; the sequence is DYYEVLGVQR…EKRSMYDRFG (65 aa). Residues 128–208 form a CR-type zinc finger; it reads GVEKTIEFRR…CRGEGRVRQT (81 aa). Residues C141, C144, C158, C161, C182, C185, C196, and C199 each coordinate Zn(2+). CXXCXGXG motif repeat units follow at residues 141-148, 158-165, 182-189, and 196-203; these read CPACRGSG, CPKCGGLG, CDMCRGEG, and CRECRGEG.

The protein belongs to the DnaJ family. In terms of assembly, homodimer. The cofactor is Zn(2+).

The protein localises to the cytoplasm. In terms of biological role, participates actively in the response to hyperosmotic and heat shock by preventing the aggregation of stress-denatured proteins and by disaggregating proteins, also in an autonomous, DnaK-independent fashion. Unfolded proteins bind initially to DnaJ; upon interaction with the DnaJ-bound protein, DnaK hydrolyzes its bound ATP, resulting in the formation of a stable complex. GrpE releases ADP from DnaK; ATP binding to DnaK triggers the release of the substrate protein, thus completing the reaction cycle. Several rounds of ATP-dependent interactions between DnaJ, DnaK and GrpE are required for fully efficient folding. Also involved, together with DnaK and GrpE, in the DNA replication of plasmids through activation of initiation proteins. The chain is Chaperone protein DnaJ from Roseiflexus sp. (strain RS-1).